A 411-amino-acid polypeptide reads, in one-letter code: ATP-dependent Clp protease ATP-binding subunit ClpX (411 aa).

One can recognise a ClpX-type ZB domain in the interval 1 to 51 (MAKKKDEEYCSFCGMPRTQVNLMLEGVHAHICDECALRAGEVVREALQKFK). The Zn(2+) site is built by C10, C13, C32, and C35. 119–126 (PTGTGKTL) provides a ligand contact to ATP.

This sequence belongs to the ClpX chaperone family. As to quaternary structure, component of the ClpX-ClpP complex. Forms a hexameric ring that, in the presence of ATP, binds to fourteen ClpP subunits assembled into a disk-like structure with a central cavity, resembling the structure of eukaryotic proteasomes.

Its function is as follows. ATP-dependent specificity component of the Clp protease. It directs the protease to specific substrates. Can perform chaperone functions in the absence of ClpP. This Porphyromonas gingivalis (strain ATCC 33277 / DSM 20709 / CIP 103683 / JCM 12257 / NCTC 11834 / 2561) protein is ATP-dependent Clp protease ATP-binding subunit ClpX.